Here is a 190-residue protein sequence, read N- to C-terminus: Holliday junction branch migration complex subunit RuvA (190 aa).

Residues 1-64 form a domain I region; sequence MIGKLTGTLL…EDAQLLYGFG (64 aa). The domain II stretch occupies residues 65-143; it reads THSERQAFRE…ADTGAQSLFV (79 aa). Positions 144-148 are flexible linker; sequence NNDQN. The domain III stretch occupies residues 148–190; sequence NDIVQALMALGYSDKDAAAALKKLPPDVGVTEGIKLALKALAK.

Belongs to the RuvA family. Homotetramer. Forms an RuvA(8)-RuvB(12)-Holliday junction (HJ) complex. HJ DNA is sandwiched between 2 RuvA tetramers; dsDNA enters through RuvA and exits via RuvB. An RuvB hexamer assembles on each DNA strand where it exits the tetramer. Each RuvB hexamer is contacted by two RuvA subunits (via domain III) on 2 adjacent RuvB subunits; this complex drives branch migration. In the full resolvosome a probable DNA-RuvA(4)-RuvB(12)-RuvC(2) complex forms which resolves the HJ.

The protein resides in the cytoplasm. In terms of biological role, the RuvA-RuvB-RuvC complex processes Holliday junction (HJ) DNA during genetic recombination and DNA repair, while the RuvA-RuvB complex plays an important role in the rescue of blocked DNA replication forks via replication fork reversal (RFR). RuvA specifically binds to HJ cruciform DNA, conferring on it an open structure. The RuvB hexamer acts as an ATP-dependent pump, pulling dsDNA into and through the RuvAB complex. HJ branch migration allows RuvC to scan DNA until it finds its consensus sequence, where it cleaves and resolves the cruciform DNA. This Delftia acidovorans (strain DSM 14801 / SPH-1) protein is Holliday junction branch migration complex subunit RuvA.